We begin with the raw amino-acid sequence, 129 residues long: Small ribosomal subunit protein uS12 (129 aa).

Position 89 is a 3-methylthioaspartic acid (Asp89). A disordered region spans residues 110-129 (RKQGRSRYGAPRKQVVATKK).

The protein belongs to the universal ribosomal protein uS12 family. Part of the 30S ribosomal subunit. Contacts proteins S8 and S17. May interact with IF1 in the 30S initiation complex.

Its function is as follows. With S4 and S5 plays an important role in translational accuracy. In terms of biological role, interacts with and stabilizes bases of the 16S rRNA that are involved in tRNA selection in the A site and with the mRNA backbone. Located at the interface of the 30S and 50S subunits, it traverses the body of the 30S subunit contacting proteins on the other side and probably holding the rRNA structure together. The combined cluster of proteins S8, S12 and S17 appears to hold together the shoulder and platform of the 30S subunit. The chain is Small ribosomal subunit protein uS12 from Rickettsia bellii (strain RML369-C).